The primary structure comprises 76 residues: Protein TraJ (76 aa).

Its subcellular location is the cytoplasm. Its function is as follows. This protein is essential for positively regulating the expression of transfer genes that are involved in the conjugal transfer of DNA between bacterial cells. The polypeptide is Protein TraJ (traJ) (Escherichia coli).